The primary structure comprises 88 residues: UPF0223 protein RBAM_014500 (88 aa).

Belongs to the UPF0223 family.

In Bacillus velezensis (strain DSM 23117 / BGSC 10A6 / LMG 26770 / FZB42) (Bacillus amyloliquefaciens subsp. plantarum), this protein is UPF0223 protein RBAM_014500.